We begin with the raw amino-acid sequence, 1485 residues long: Dicer-like protein 2 (1485 aa).

The span at 1–11 (MSSQDESASSS) shows a compositional bias: low complexity. The disordered stretch occupies residues 1–61 (MSSQDESASS…EPQPSGNGPR (61 aa)). Residues 72–250 (MFQASMQQNI…MEDLESSLDS (179 aa)) enclose the Helicase ATP-binding domain. An ATP-binding site is contributed by 85-92 (MDTGSGKT). The short motif at 193–196 (DEAH) is the DEAH box element. The Helicase C-terminal domain maps to 415-579 (KLQVLLRILR…RYENDMRELD (165 aa)). In terms of domain architecture, Dicer dsRNA-binding fold spans 609–712 (AKGHLEHFCR…LPIRESDFVD (104 aa)). RNase III domains follow at residues 988-1127 (AQEL…IEGG) and 1168-1358 (LGPL…VDSG). Positions 1208, 1344, and 1347 each coordinate Mg(2+). The 82-residue stretch at 1388–1469 (HPKEELGRVA…ALEVIRVWEE (82 aa)) folds into the DRBM domain.

Belongs to the helicase family. Dicer subfamily. Mg(2+) serves as cofactor. Requires Mn(2+) as cofactor.

In terms of biological role, dicer-like endonuclease involved in cleaving double-stranded RNA in the RNA interference (RNAi) pathway. Produces 21 to 25 bp dsRNAs (siRNAs) which target the selective destruction of homologous RNAs leading to sequence-specific suppression of gene expression, called post-transcriptional gene silencing (PTGS). Part of a broad host defense response against viral infection and transposons. The chain is Dicer-like protein 2 (DCL2) from Pyricularia oryzae (strain 70-15 / ATCC MYA-4617 / FGSC 8958) (Rice blast fungus).